Here is a 257-residue protein sequence, read N- to C-terminus: tRNA-cytidine(32) 2-sulfurtransferase (257 aa).

Residues 37–42 (SGGKDS) carry the PP-loop motif motif. Positions 112, 115, and 202 each coordinate [4Fe-4S] cluster.

This sequence belongs to the TtcA family. As to quaternary structure, homodimer. The cofactor is Mg(2+). [4Fe-4S] cluster is required as a cofactor.

The protein resides in the cytoplasm. It carries out the reaction cytidine(32) in tRNA + S-sulfanyl-L-cysteinyl-[cysteine desulfurase] + AH2 + ATP = 2-thiocytidine(32) in tRNA + L-cysteinyl-[cysteine desulfurase] + A + AMP + diphosphate + H(+). It participates in tRNA modification. Catalyzes the ATP-dependent 2-thiolation of cytidine in position 32 of tRNA, to form 2-thiocytidine (s(2)C32). The sulfur atoms are provided by the cysteine/cysteine desulfurase (IscS) system. This chain is tRNA-cytidine(32) 2-sulfurtransferase, found in Geobacter metallireducens (strain ATCC 53774 / DSM 7210 / GS-15).